We begin with the raw amino-acid sequence, 308 residues long: Glutaminase (308 aa).

Serine 66, asparagine 117, glutamate 161, asparagine 168, tyrosine 192, tyrosine 244, and valine 262 together coordinate substrate.

The protein belongs to the glutaminase family. As to quaternary structure, homotetramer.

The catalysed reaction is L-glutamine + H2O = L-glutamate + NH4(+). This chain is Glutaminase, found in Yersinia pestis bv. Antiqua (strain Nepal516).